Here is a 300-residue protein sequence, read N- to C-terminus: MQSILSQSPGSRFSQYMALTKPRVTQLAVFCAVIGMFLATPGMVPWRVLIGGTVGIWLLAGAAFAINCLVEQKIDAMMRRTAWRPSARGEITTPQILLFSAVLGSIGAWTLYTFTNPLTMWLTIATFVGYAVIYTLLLKPMTPQNIVIGGASGAMPPALGWAAVTGAVPGDAWILVLIIFVWTPPHFWVLALYRRKDYENAGLPMLPVTHGEQYTRLHILLYTVILFAVTLMPFISGMSGAVYLTSAVLLGAVFLAYAWKIYRDYSDALARKAFRYSIVYLSLLFAALLVDHYARPLLGV.

Transmembrane regions (helical) follow at residues 24–44 (VTQL…PGMV), 48–68 (VLIG…AINC), 94–114 (PQIL…LYTF), 118–138 (LTMW…TLLL), 146–166 (IVIG…AVTG), 172–192 (AWIL…VLAL), 217–237 (LHIL…FISG), 239–259 (SGAV…AYAW), and 278–298 (IVYL…RPLL).

The protein belongs to the UbiA prenyltransferase family. Protoheme IX farnesyltransferase subfamily.

The protein resides in the cell inner membrane. It carries out the reaction heme b + (2E,6E)-farnesyl diphosphate + H2O = Fe(II)-heme o + diphosphate. Its pathway is porphyrin-containing compound metabolism; heme O biosynthesis; heme O from protoheme: step 1/1. In terms of biological role, converts heme B (protoheme IX) to heme O by substitution of the vinyl group on carbon 2 of heme B porphyrin ring with a hydroxyethyl farnesyl side group. This Burkholderia vietnamiensis (strain G4 / LMG 22486) (Burkholderia cepacia (strain R1808)) protein is Protoheme IX farnesyltransferase.